The sequence spans 112 residues: Urease subunit beta (112 aa).

This sequence belongs to the urease beta subunit family. Heterotrimer of UreA (gamma), UreB (beta) and UreC (alpha) subunits. Three heterotrimers associate to form the active enzyme.

It is found in the cytoplasm. It carries out the reaction urea + 2 H2O + H(+) = hydrogencarbonate + 2 NH4(+). Its pathway is nitrogen metabolism; urea degradation; CO(2) and NH(3) from urea (urease route): step 1/1. This is Urease subunit beta from Polaromonas sp. (strain JS666 / ATCC BAA-500).